We begin with the raw amino-acid sequence, 132 residues long: Small ribosomal subunit protein uS8 (132 aa).

This sequence belongs to the universal ribosomal protein uS8 family. In terms of assembly, part of the 30S ribosomal subunit. Contacts proteins S5 and S12.

Its function is as follows. One of the primary rRNA binding proteins, it binds directly to 16S rRNA central domain where it helps coordinate assembly of the platform of the 30S subunit. This is Small ribosomal subunit protein uS8 from Mycobacterium marinum (strain ATCC BAA-535 / M).